A 494-amino-acid polypeptide reads, in one-letter code: PIGF/3-ketodihydrosphingosine reductase fusion protein (494 aa).

NADPH is bound by residues glycine 20, serine 22, and glycine 24. A GXSXG motif is present at residues 20–24 (GGSQG). NADP(+) is bound at residue leucine 25. The NADPH site is built by arginine 45 and lysine 49. Valine 54 lines the NADP(+) pocket. Aspartate 74 and leucine 75 together coordinate NADPH. The chain crosses the membrane as a helical span at residues 148-168 (ILLVGSLLSSLPIIGYSAYSP). NADP(+)-binding residues include tyrosine 166, lysine 170, and isoleucine 199. Residue tyrosine 166 is the Proton acceptor of the active site. The active-site Lowers pKa of active site Tyr is lysine 170. A run of 6 helical transmembrane segments spans residues 264 to 284 (HDNPILEYLFALVSLLAWPFY), 312 to 332 (IFTLLLTFTQLTIFYLSLNCL), 370 to 390 (LAGAASMLIGSLLISFILVAF), 402 to 422 (YFCALTLSVFTVYPLASTLAF), 444 to 464 (LRSWGPIIGAWFGAFPIPLDW), and 473 to 493 (ITIVIGAFLGYAFAAIVGEIL).

In the N-terminal section; belongs to the short-chain dehydrogenases/reductases (SDR) family. It in the C-terminal section; belongs to the PIGF family.

The protein localises to the endoplasmic reticulum membrane. The enzyme catalyses sphinganine + NADP(+) = 3-oxosphinganine + NADPH + H(+). The protein operates within glycolipid biosynthesis; glycosylphosphatidylinositol-anchor biosynthesis. Its pathway is lipid metabolism; sphingolipid metabolism. In terms of biological role, acts in the GPI biosynthetic pathway between GlcNAc-PI synthesis and GPI transfer to protein. Required for the formation of complete GPI precursors CP1 and CP2. Catalyzes the reduction of 3'-oxosphinganine (3-ketodihydrosphingosine/KDS) to sphinganine (dihydrosphingosine/DHS), the second step of de novo sphingolipid biosynthesis. This Schizosaccharomyces pombe (strain 972 / ATCC 24843) (Fission yeast) protein is PIGF/3-ketodihydrosphingosine reductase fusion protein.